The primary structure comprises 364 residues: 4-hydroxythreonine-4-phosphate dehydrogenase (364 aa).

2 residues coordinate substrate: His148 and Thr149. 3 residues coordinate a divalent metal cation: His177, His216, and His301. The substrate site is built by Lys309, Asn318, and Arg327.

Belongs to the PdxA family. Homodimer. It depends on Zn(2+) as a cofactor. The cofactor is Mg(2+). Co(2+) is required as a cofactor.

The protein resides in the cytoplasm. The catalysed reaction is 4-(phosphooxy)-L-threonine + NAD(+) = 3-amino-2-oxopropyl phosphate + CO2 + NADH. The protein operates within cofactor biosynthesis; pyridoxine 5'-phosphate biosynthesis; pyridoxine 5'-phosphate from D-erythrose 4-phosphate: step 4/5. In terms of biological role, catalyzes the NAD(P)-dependent oxidation of 4-(phosphooxy)-L-threonine (HTP) into 2-amino-3-oxo-4-(phosphooxy)butyric acid which spontaneously decarboxylates to form 3-amino-2-oxopropyl phosphate (AHAP). This is 4-hydroxythreonine-4-phosphate dehydrogenase from Campylobacter jejuni subsp. jejuni serotype O:23/36 (strain 81-176).